The primary structure comprises 259 residues: UPF0246 protein PLES_14941 (259 aa).

It belongs to the UPF0246 family.

The sequence is that of UPF0246 protein PLES_14941 from Pseudomonas aeruginosa (strain LESB58).